The following is a 137-amino-acid chain: Prostate and testis expressed protein 13 (137 aa).

An N-terminal signal peptide occupies residues 1-20 (MFQKLLLSVFIILLMDVGER). The UPAR/Ly6 domain maps to 28 to 114 (RHCNLCSHYD…CIDRNYCNDG (87 aa)). Intrachain disulfides connect Cys-30-Cys-60, Cys-33-Cys-41, Cys-48-Cys-84, Cys-87-Cys-104, and Cys-105-Cys-111. A glycan (N-linked (GlcNAc...) asparagine) is linked at Asn-57.

Belongs to the PATE family. As to expression, strongly expressed in the epididymis, including the initial segment, caput, corpus and cauda regions. Weakly expressed in prostate.

The protein resides in the secreted. The sequence is that of Prostate and testis expressed protein 13 from Mus musculus (Mouse).